The following is a 252-amino-acid chain: Chitooligosaccharide deacetylase (252 aa).

Residues H61 and H125 each contribute to the Mg(2+) site.

Belongs to the YdjC deacetylase family. ChbG subfamily. Homodimer. Mg(2+) serves as cofactor.

The protein localises to the cytoplasm. It carries out the reaction N,N'-diacetylchitobiose + H2O = N-acetyl-beta-D-glucosaminyl-(1-&gt;4)-D-glucosamine + acetate. The enzyme catalyses diacetylchitobiose-6'-phosphate + H2O = N'-monoacetylchitobiose-6'-phosphate + acetate. It participates in glycan degradation; chitin degradation. Functionally, involved in the degradation of chitin. ChbG is essential for growth on the acetylated chitooligosaccharides chitobiose and chitotriose but is dispensable for growth on cellobiose and chitosan dimer, the deacetylated form of chitobiose. Deacetylation of chitobiose-6-P and chitotriose-6-P is necessary for both the activation of the chb promoter by the regulatory protein ChbR and the hydrolysis of phosphorylated beta-glucosides by the phospho-beta-glucosidase ChbF. Catalyzes the removal of only one acetyl group from chitobiose-6-P to yield monoacetylchitobiose-6-P, the inducer of ChbR and the substrate of ChbF. The protein is Chitooligosaccharide deacetylase of Shigella flexneri serotype 5b (strain 8401).